The following is a 69-amino-acid chain: uncharacterized protein (69 aa).

This is an uncharacterized protein from Bacillus anthracis.